The chain runs to 97 residues: DNA/RNA-binding protein Alba (97 aa).

At Lys-15 the chain carries N6-acetyllysine.

It belongs to the histone-like Alba family. In terms of processing, acetylated. Acetylation at Lys-15 decreases DNA-binding affinity.

It is found in the cytoplasm. It localises to the chromosome. Binds double-stranded DNA tightly but without sequence specificity. Involved in DNA compaction. This Ignicoccus hospitalis (strain KIN4/I / DSM 18386 / JCM 14125) protein is DNA/RNA-binding protein Alba.